Reading from the N-terminus, the 375-residue chain is Queuine tRNA-ribosyltransferase (375 aa).

Catalysis depends on Asp-94, which acts as the Proton acceptor. Substrate is bound by residues 94–98 (DSGGF), Asp-148, Gln-191, and Gly-218. Residues 249–255 (GVGSPDD) are RNA binding. Asp-268 functions as the Nucleophile in the catalytic mechanism. The interval 273–277 (TRIAR) is RNA binding; important for wobble base 34 recognition. Cys-306, Cys-308, Cys-311, and His-337 together coordinate Zn(2+).

The protein belongs to the queuine tRNA-ribosyltransferase family. As to quaternary structure, homodimer. Within each dimer, one monomer is responsible for RNA recognition and catalysis, while the other monomer binds to the replacement base PreQ1. Zn(2+) serves as cofactor.

It catalyses the reaction 7-aminomethyl-7-carbaguanine + guanosine(34) in tRNA = 7-aminomethyl-7-carbaguanosine(34) in tRNA + guanine. The protein operates within tRNA modification; tRNA-queuosine biosynthesis. Its function is as follows. Catalyzes the base-exchange of a guanine (G) residue with the queuine precursor 7-aminomethyl-7-deazaguanine (PreQ1) at position 34 (anticodon wobble position) in tRNAs with GU(N) anticodons (tRNA-Asp, -Asn, -His and -Tyr). Catalysis occurs through a double-displacement mechanism. The nucleophile active site attacks the C1' of nucleotide 34 to detach the guanine base from the RNA, forming a covalent enzyme-RNA intermediate. The proton acceptor active site deprotonates the incoming PreQ1, allowing a nucleophilic attack on the C1' of the ribose to form the product. After dissociation, two additional enzymatic reactions on the tRNA convert PreQ1 to queuine (Q), resulting in the hypermodified nucleoside queuosine (7-(((4,5-cis-dihydroxy-2-cyclopenten-1-yl)amino)methyl)-7-deazaguanosine). In Thermoanaerobacter pseudethanolicus (strain ATCC 33223 / 39E) (Clostridium thermohydrosulfuricum), this protein is Queuine tRNA-ribosyltransferase.